The sequence spans 367 residues: MTKVLLSHPPRPASHNSSRAMVWVRKNLFSSWSNSLLTIGCIWLMWELIPPLLNWAFLQANWVGSTRADCTKAGACWVFIHERFGQFMYGLYPHDQRWRINLALLIGLVSIAPMFWKILPHRGRYIAAWAVIYPLIVWWLMYGGFFALERVETRQWGGLTLTLIIASVGIAGALPWGILLALGRRSHMPIVRILSVIFIEFWRGVPLITVLFMSSVMLPLFMAEGTSIDKLIRALVGVILFQSAYVAEVVRGGLQALPKGQYEAAESLALGYWKTQGLVILPQALKLVIPGLVNTIIALFKDTSLVIIIGLFDLFSSVQQATVDPAWLGMSTEGYVFAALIYWIFCFSMSRYSQYLEKRFNTGRTPH.

Residues 1 to 36 lie on the Cytoplasmic side of the membrane; it reads MTKVLLSHPPRPASHNSSRAMVWVRKNLFSSWSNSL. Residues 37 to 57 traverse the membrane as a helical segment; the sequence is LTIGCIWLMWELIPPLLNWAF. The Periplasmic portion of the chain corresponds to 58–99; that stretch reads LQANWVGSTRADCTKAGACWVFIHERFGQFMYGLYPHDQRWR. The chain crosses the membrane as a helical span at residues 100–120; that stretch reads INLALLIGLVSIAPMFWKILP. Topologically, residues 121-125 are cytoplasmic; it reads HRGRY. Residues 126 to 146 traverse the membrane as a helical segment; the sequence is IAAWAVIYPLIVWWLMYGGFF. Topologically, residues 147 to 162 are periplasmic; it reads ALERVETRQWGGLTLT. Residues 159 to 353 form the ABC transmembrane type-1 domain; sequence LTLTLIIASV…IFCFSMSRYS (195 aa). The chain crosses the membrane as a helical span at residues 163 to 183; sequence LIIASVGIAGALPWGILLALG. Residues 184-192 lie on the Cytoplasmic side of the membrane; sequence RRSHMPIVR. Residues 193–213 traverse the membrane as a helical segment; the sequence is ILSVIFIEFWRGVPLITVLFM. The Periplasmic portion of the chain corresponds to 214 to 233; sequence SSVMLPLFMAEGTSIDKLIR. Residues 234-254 form a helical membrane-spanning segment; it reads ALVGVILFQSAYVAEVVRGGL. The Cytoplasmic portion of the chain corresponds to 255–291; it reads QALPKGQYEAAESLALGYWKTQGLVILPQALKLVIPG. The helical transmembrane segment at 292-312 threads the bilayer; it reads LVNTIIALFKDTSLVIIIGLF. The Periplasmic segment spans residues 313–326; it reads DLFSSVQQATVDPA. Residues 327 to 347 form a helical membrane-spanning segment; it reads WLGMSTEGYVFAALIYWIFCF. At 348–367 the chain is on the cytoplasmic side; the sequence is SMSRYSQYLEKRFNTGRTPH.

This sequence belongs to the binding-protein-dependent transport system permease family. HisMQ subfamily.

It is found in the cell inner membrane. Probably part of the binding-protein-dependent transport system YdhWXYZ for an amino acid; probably responsible for the translocation of the substrate across the membrane. The protein is Inner membrane amino-acid ABC transporter permease protein YhdY (yhdY) of Escherichia coli (strain K12).